A 383-amino-acid polypeptide reads, in one-letter code: MSLVTDLPAIFDQFSEARQTGFLTVMDLKERGIPLVGTYCTFMPQEIPMAAGAVVVSLCSTSDETIEEAEKDLPRNLCPLIKSSYGFGKTDKCPYFYFSDLVVGETTCDGKKKMYEYMAEFKPVHVMQLPNSVKDDASRALWKAEMLRLQKTVEERFGHEISEDALRDAIALKNRERRALANFYHLGQLNPPALSGSDILKVVYGATFRFDKEALINELDAMTARVRQQWEEGQRLDPRPRILITGCPIGGAAEKVVRAIEENGGWVVGYENCTGAKATEQCVAETGDVYDALADKYLAIGCSCVSPNDQRLKMLSQMVEEYQVDGVVDVILQACHTYAVESLAIKRHVRQQHNIPYIAIETDYSTSDVGQLSTRVAAFIEML.

It belongs to the FldB/FldC dehydratase alpha/beta subunit family.

The chain is Putative dehydratase subunit YjiM (yjiM) from Escherichia coli (strain K12).